A 436-amino-acid polypeptide reads, in one-letter code: GTPase Der (436 aa).

2 EngA-type G domains span residues 4-167 (PTIA…PNTS) and 175-351 (IKFS…MNQN). Residues 10-17 (GRPNVGKS), 57-61 (DTGGI), 119-122 (NKVD), 181-188 (GRPNVGKS), 229-233 (DTAGM), and 294-297 (NKWD) each bind GTP. A KH-like domain is found at 352-436 (LRIPSALLND…PIKIIPRRRK (85 aa)).

This sequence belongs to the TRAFAC class TrmE-Era-EngA-EngB-Septin-like GTPase superfamily. EngA (Der) GTPase family. In terms of assembly, associates with the 50S ribosomal subunit.

Its function is as follows. GTPase that plays an essential role in the late steps of ribosome biogenesis. This Enterococcus faecalis (strain ATCC 700802 / V583) protein is GTPase Der.